A 357-amino-acid chain; its full sequence is DNA replication and repair protein RecF (357 aa).

Residue 30–37 (GANGSGKT) participates in ATP binding.

It belongs to the RecF family.

The protein localises to the cytoplasm. Its function is as follows. The RecF protein is involved in DNA metabolism; it is required for DNA replication and normal SOS inducibility. RecF binds preferentially to single-stranded, linear DNA. It also seems to bind ATP. The polypeptide is DNA replication and repair protein RecF (Citrobacter koseri (strain ATCC BAA-895 / CDC 4225-83 / SGSC4696)).